Reading from the N-terminus, the 362-residue chain is Aminomethyltransferase (362 aa).

The protein belongs to the GcvT family. In terms of assembly, the glycine cleavage system is composed of four proteins: P, T, L and H.

The enzyme catalyses N(6)-[(R)-S(8)-aminomethyldihydrolipoyl]-L-lysyl-[protein] + (6S)-5,6,7,8-tetrahydrofolate = N(6)-[(R)-dihydrolipoyl]-L-lysyl-[protein] + (6R)-5,10-methylene-5,6,7,8-tetrahydrofolate + NH4(+). In terms of biological role, the glycine cleavage system catalyzes the degradation of glycine. This Bacillus subtilis (strain 168) protein is Aminomethyltransferase.